A 309-amino-acid polypeptide reads, in one-letter code: Homoserine O-succinyltransferase (309 aa).

Catalysis depends on Cys142, which acts as the Acyl-thioester intermediate. Substrate is bound by residues Lys163 and Ser192. The Proton acceptor role is filled by His235. Glu237 is an active-site residue. Arg249 serves as a coordination point for substrate.

It belongs to the MetA family. As to quaternary structure, homodimer.

Its subcellular location is the cytoplasm. The enzyme catalyses L-homoserine + succinyl-CoA = O-succinyl-L-homoserine + CoA. Its pathway is amino-acid biosynthesis; L-methionine biosynthesis via de novo pathway; O-succinyl-L-homoserine from L-homoserine: step 1/1. Functionally, transfers a succinyl group from succinyl-CoA to L-homoserine, forming succinyl-L-homoserine. The polypeptide is Homoserine O-succinyltransferase (Salmonella arizonae (strain ATCC BAA-731 / CDC346-86 / RSK2980)).